Consider the following 80-residue polypeptide: Large ribosomal subunit protein bL31B (80 aa).

It belongs to the bacterial ribosomal protein bL31 family. Type B subfamily. Part of the 50S ribosomal subunit.

The chain is Large ribosomal subunit protein bL31B from Xanthomonas axonopodis pv. citri (strain 306).